Reading from the N-terminus, the 309-residue chain is Porphobilinogen deaminase (309 aa).

C242 carries the S-(dipyrrolylmethanemethyl)cysteine modification.

The protein belongs to the HMBS family. In terms of assembly, monomer. The cofactor is dipyrromethane.

It carries out the reaction 4 porphobilinogen + H2O = hydroxymethylbilane + 4 NH4(+). The protein operates within porphyrin-containing compound metabolism; protoporphyrin-IX biosynthesis; coproporphyrinogen-III from 5-aminolevulinate: step 2/4. Its function is as follows. Tetrapolymerization of the monopyrrole PBG into the hydroxymethylbilane pre-uroporphyrinogen in several discrete steps. In Shewanella frigidimarina (strain NCIMB 400), this protein is Porphobilinogen deaminase.